Here is a 111-residue protein sequence, read N- to C-terminus: X antigen family member 2 (111 aa).

Disordered stretches follow at residues 1 to 61 (MSWR…AAEI) and 77 to 111 (KTGDGCEGGTDVKGKILPKAEHFKMPEAGEGKSQV). Basic and acidic residues predominate over residues 86 to 111 (TDVKGKILPKAEHFKMPEAGEGKSQV).

The protein belongs to the GAGE family.

This is X antigen family member 2 (XAGE2) from Homo sapiens (Human).